Here is a 454-residue protein sequence, read N- to C-terminus: UDP-N-acetylmuramoylalanine--D-glutamate ligase (454 aa).

Glycine 118–threonine 124 contributes to the ATP binding site.

Belongs to the MurCDEF family.

Its subcellular location is the cytoplasm. The enzyme catalyses UDP-N-acetyl-alpha-D-muramoyl-L-alanine + D-glutamate + ATP = UDP-N-acetyl-alpha-D-muramoyl-L-alanyl-D-glutamate + ADP + phosphate + H(+). Its pathway is cell wall biogenesis; peptidoglycan biosynthesis. Cell wall formation. Catalyzes the addition of glutamate to the nucleotide precursor UDP-N-acetylmuramoyl-L-alanine (UMA). In Thermosynechococcus vestitus (strain NIES-2133 / IAM M-273 / BP-1), this protein is UDP-N-acetylmuramoylalanine--D-glutamate ligase.